Here is a 533-residue protein sequence, read N- to C-terminus: tRNA(Ile)-lysidine synthase (533 aa).

An ATP-binding site is contributed by 21–26 (SGGADS). One can recognise a CMP/dCMP-type deaminase domain in the interval 377–500 (DLLDTAMGEA…DLLSSHWGHV (124 aa)).

It belongs to the tRNA(Ile)-lysidine synthase family.

It is found in the cytoplasm. It catalyses the reaction cytidine(34) in tRNA(Ile2) + L-lysine + ATP = lysidine(34) in tRNA(Ile2) + AMP + diphosphate + H(+). Its function is as follows. Ligates lysine onto the cytidine present at position 34 of the AUA codon-specific tRNA(Ile) that contains the anticodon CAU, in an ATP-dependent manner. Cytidine is converted to lysidine, thus changing the amino acid specificity of the tRNA from methionine to isoleucine. This chain is tRNA(Ile)-lysidine synthase, found in Deinococcus deserti (strain DSM 17065 / CIP 109153 / LMG 22923 / VCD115).